The primary structure comprises 855 residues: MSEARRDSTSSLQRKKPPWLKLDIPSAAPATAEEPSFLQPLRRQVFLRSVSMPAETAHISSPHYELRRPVLQRQTSITQTIRRGAADWFGVSKESDSTQKWQRKSIRHCSQRYGKLKPQVLRELDLPSQDNVSLTSTETPPPLYVGPCQLGMQKIIDPLARGRAFRVADDTAEGLSAPHTPVTPGAASLCSFSSSRSGFHRLPRRRKRESVAKMSFRAAAALMKGRSVRDGTLRRAQRRSFTPASFLEEDTTDFPDELDTSFFAREGILHEELSTYPDEVFESPSEAALKDWEKAPEQADLTGGALDRSELERSHLMLPLERGWRKQKEGAAAQQPKVRLRQEVVSTAGPRRGQRIAVPVRKLFAREKRPYGLGMVGRLTNRTYRKRIDSFVKRQIEDMDDHRPFFTYWLTFVHSLVTILAVCIYGIAPVGFSQHETVDSVLRNRGVYENVKYVQQENFWIGPSSEALIHLGAKFSPCMRQDPQVHSFIRAAREREKHSACCVRNDRSGCVQTSEEECSSTLAVWVKWPVHPSAPELAGHKRQFGSVCHQDPRVCDEPSSEDPHEWPEDITRWPICTKNSAGNHTNHPHMDCVITGRPCCIGTKGRCEITSREYCDFMRGYFHEEATLCSQVHCMDDVCGLLPFLNPEVPDQFYRLWLSLFLHAGILHCLVSICFQMTVLRDLEKLAGWHRIAIIYLLSGVTGNLASAIFLPYRAEVGPAGSQFGILACLFVELFQSWQILARPWRAFFKLLAVVLFLFTFGLLPWIDNFAHISGFISGLFLSFAFLPYISFGKFDLYRKRCQIIVFQVVFLGLLAGLVVLFYVYPVRCEWCEFLTCIPFTDKFCEKYELDAQLH.

Residues 1 to 35 (MSEARRDSTSSLQRKKPPWLKLDIPSAAPATAEEP) form a disordered region. Topologically, residues 1-411 (MSEARRDSTS…HRPFFTYWLT (411 aa)) are cytoplasmic. Over residues 25–35 (PSAAPATAEEP) the composition is skewed to low complexity. A phosphoserine mark is found at Ser76 and Ser176. Phosphothreonine occurs at positions 180 and 183. Ser390 carries the phosphoserine modification. A helical transmembrane segment spans residues 412–432 (FVHSLVTILAVCIYGIAPVGF). The Lumenal portion of the chain corresponds to 433-655 (SQHETVDSVL…NPEVPDQFYR (223 aa)). A glycan (N-linked (GlcNAc...) asparagine) is linked at Asn583. The chain crosses the membrane as a helical span at residues 656–676 (LWLSLFLHAGILHCLVSICFQ). Topologically, residues 677–691 (MTVLRDLEKLAGWHR) are cytoplasmic. A helical membrane pass occupies residues 692–712 (IAIIYLLSGVTGNLASAIFLP). Residues 713-714 (YR) are Lumenal-facing. The chain crosses the membrane as a helical span at residues 715 to 735 (AEVGPAGSQFGILACLFVELF). Topologically, residues 736-746 (QSWQILARPWR) are cytoplasmic. A helical membrane pass occupies residues 747 to 767 (AFFKLLAVVLFLFTFGLLPWI). At 768–772 (DNFAH) the chain is on the lumenal side. The helical transmembrane segment at 773 to 793 (ISGFISGLFLSFAFLPYISFG) threads the bilayer. Residues 794 to 803 (KFDLYRKRCQ) lie on the Cytoplasmic side of the membrane. A helical membrane pass occupies residues 804–824 (IIVFQVVFLGLLAGLVVLFYV). Residues 825–855 (YPVRCEWCEFLTCIPFTDKFCEKYELDAQLH) are Lumenal-facing.

This sequence belongs to the peptidase S54 family. Homodimer, or homooligomer. Interacts with TGFA and HBEGF. Interacts with EGF; may retain EGF in the endoplasmic reticulum and regulates its degradation through the endoplasmic reticulum-associated degradation (ERAD). Interacts (via cytoplasmic N-terminus) with FRMD8/iTAP; this interaction leads to mutual protein stabilization. Interacts with ADAM17/TACE.

The protein localises to the endoplasmic reticulum membrane. The protein resides in the golgi apparatus membrane. Regulates ADAM17 protease, a sheddase of the epidermal growth factor (EGF) receptor ligands and TNF, thereby plays a role in sleep, cell survival, proliferation, migration and inflammation. Does not exhibit any protease activity on its own. The protein is Inactive rhomboid protein 1 (RHBDF1) of Callithrix jacchus (White-tufted-ear marmoset).